Reading from the N-terminus, the 636-residue chain is Beta-galactosidase-1-like protein 2 (636 aa).

An N-terminal signal peptide occupies residues 1 to 32 (MTTWSLRRRPARTLGLLLLVVLGFLVLRRLDW). Residue E201 is the Proton donor of the active site. E277 (nucleophile) is an active-site residue.

It belongs to the glycosyl hydrolase 35 family.

It is found in the secreted. This chain is Beta-galactosidase-1-like protein 2 (GLB1L2), found in Homo sapiens (Human).